Consider the following 309-residue polypeptide: Porphobilinogen deaminase (309 aa).

An S-(dipyrrolylmethanemethyl)cysteine modification is found at Cys-242.

Belongs to the HMBS family. Monomer. Requires dipyrromethane as cofactor.

The catalysed reaction is 4 porphobilinogen + H2O = hydroxymethylbilane + 4 NH4(+). It participates in porphyrin-containing compound metabolism; protoporphyrin-IX biosynthesis; coproporphyrinogen-III from 5-aminolevulinate: step 2/4. Functionally, tetrapolymerization of the monopyrrole PBG into the hydroxymethylbilane pre-uroporphyrinogen in several discrete steps. This is Porphobilinogen deaminase from Syntrophobacter fumaroxidans (strain DSM 10017 / MPOB).